The primary structure comprises 418 residues: Elongation factor Tu, chloroplastic (418 aa).

The tr-type G domain maps to 10-214; sequence KPHVNIGTIG…NVDSYIPTPQ (205 aa). The interval 19–26 is G1; the sequence is GHVDHGKT. 19–26 is a binding site for GTP; that stretch reads GHVDHGKT. Threonine 26 contacts Mg(2+). Residues 60 to 64 form a G2 region; the sequence is GITIN. A G3 region spans residues 81 to 84; sequence DCPG. Residues 81 to 85 and 136 to 139 each bind GTP; these read DCPGH and NKED. Residues 136–139 are G4; the sequence is NKED. Positions 174–176 are G5; sequence SAL.

The protein belongs to the TRAFAC class translation factor GTPase superfamily. Classic translation factor GTPase family. EF-Tu/EF-1A subfamily.

The protein localises to the plastid. Its subcellular location is the chloroplast. The catalysed reaction is GTP + H2O = GDP + phosphate + H(+). Functionally, GTP hydrolase that promotes the GTP-dependent binding of aminoacyl-tRNA to the A-site of ribosomes during protein biosynthesis. This Chlamydomonas reinhardtii (Chlamydomonas smithii) protein is Elongation factor Tu, chloroplastic (tufA).